The sequence spans 685 residues: Sulfite reductase [ferredoxin], chloroplastic (685 aa).

The N-terminal 51 residues, 1 to 51, are a transit peptide targeting the chloroplast; sequence MTTSFAAAALRDPKLQIPNYHGLRSSSAASSLSRNALSVPSSTRSSSLIRA. [4Fe-4S] cluster contacts are provided by Cys-495, Cys-501, Cys-541, and Cys-545. Cys-545 is a binding site for siroheme.

The protein belongs to the nitrite and sulfite reductase 4Fe-4S domain family. As to quaternary structure, monomer. Interacts with ferredoxin. Requires siroheme as cofactor. [4Fe-4S] cluster serves as cofactor. Phosphorylated; this phosphorylation reduces DNA-binding. As to expression, expressed in leaves, stems, and roots.

The protein localises to the plastid. It is found in the chloroplast stroma. It localises to the chloroplast nucleoid. The protein resides in the plastid stroma. It carries out the reaction hydrogen sulfide + 6 oxidized [2Fe-2S]-[ferredoxin] + 3 H2O = sulfite + 6 reduced [2Fe-2S]-[ferredoxin] + 7 H(+). In terms of biological role, essential protein with sulfite reductase activity required in assimilatory sulfate reduction pathway during both primary and secondary metabolism and thus involved in development and growth. Functionally, DNA-binding protein that binds to both double-stranded and single-stranded DNA without significant sequence specificity to reversibly repress the transcriptional activity of chloroplast nucleoids by promoting DNA compaction and possibly regulate DNA replication. This chain is Sulfite reductase [ferredoxin], chloroplastic (SIR), found in Pisum sativum (Garden pea).